A 376-amino-acid polypeptide reads, in one-letter code: Na(+)/H(+) antiporter NhaA (376 aa).

A run of 11 helical transmembrane segments spans residues 8–28, 49–69, 87–107, 117–137, 140–160, 162–182, 209–229, 248–268, 270–290, 321–341, and 349–369; these read FLAT…AAML, LSLL…LVGL, ILPC…YLAF, GWAI…ALLG, APAS…MGAV, IIAL…AIVI, LAVL…ALAI, PWVA…VSFA, IGAE…LFLG, GVAL…GLAF, and EVKI…YALL.

The protein belongs to the NhaA Na(+)/H(+) (TC 2.A.33) antiporter family.

Its subcellular location is the cell inner membrane. It carries out the reaction Na(+)(in) + 2 H(+)(out) = Na(+)(out) + 2 H(+)(in). Its function is as follows. Na(+)/H(+) antiporter that extrudes sodium in exchange for external protons. The protein is Na(+)/H(+) antiporter NhaA of Rhizorhabdus wittichii (strain DSM 6014 / CCUG 31198 / JCM 15750 / NBRC 105917 / EY 4224 / RW1) (Sphingomonas wittichii).